The chain runs to 250 residues: uncharacterized protein (250 aa).

The N-terminal stretch at 1–17 (MRTLVLLSSVAILSTLA) is a signal peptide. N-linked (GlcNAc...) asparagine glycosylation is found at N48, N159, N223, and N239.

It localises to the secreted. This is an uncharacterized protein from Caenorhabditis elegans.